Here is a 401-residue protein sequence, read N- to C-terminus: CCA-adding enzyme (401 aa).

Residues glycine 32 and arginine 35 each coordinate ATP. 2 residues coordinate CTP: glycine 32 and arginine 35. Mg(2+)-binding residues include aspartate 45 and aspartate 47. ATP contacts are provided by arginine 116, aspartate 159, arginine 162, arginine 165, and arginine 168. CTP is bound by residues arginine 116, aspartate 159, arginine 162, arginine 165, and arginine 168.

This sequence belongs to the tRNA nucleotidyltransferase/poly(A) polymerase family. Bacterial CCA-adding enzyme type 3 subfamily. Homodimer. Requires Mg(2+) as cofactor.

The enzyme catalyses a tRNA precursor + 2 CTP + ATP = a tRNA with a 3' CCA end + 3 diphosphate. It catalyses the reaction a tRNA with a 3' CCA end + 2 CTP + ATP = a tRNA with a 3' CCACCA end + 3 diphosphate. Its function is as follows. Catalyzes the addition and repair of the essential 3'-terminal CCA sequence in tRNAs without using a nucleic acid template. Adds these three nucleotides in the order of C, C, and A to the tRNA nucleotide-73, using CTP and ATP as substrates and producing inorganic pyrophosphate. tRNA 3'-terminal CCA addition is required both for tRNA processing and repair. Also involved in tRNA surveillance by mediating tandem CCA addition to generate a CCACCA at the 3' terminus of unstable tRNAs. While stable tRNAs receive only 3'-terminal CCA, unstable tRNAs are marked with CCACCA and rapidly degraded. The polypeptide is CCA-adding enzyme (Streptococcus mutans serotype c (strain ATCC 700610 / UA159)).